Reading from the N-terminus, the 385-residue chain is Outer membrane porin protein BP0840 (385 aa).

The signal sequence occupies residues 1 to 20 (MKKTLLAAALLAGFAGAAQA).

This sequence to bacterial outer membrane proteins and porins. As to quaternary structure, homotrimer.

It is found in the cell outer membrane. In terms of biological role, forms anion selective channels. This is Outer membrane porin protein BP0840 from Bordetella pertussis (strain Tohama I / ATCC BAA-589 / NCTC 13251).